Here is a 346-residue protein sequence, read N- to C-terminus: Methylthioribose-1-phosphate isomerase (346 aa).

Substrate is bound by residues 46 to 48 (RGA), Arg89, and Gln196. The active-site Proton donor is Asp237. Substrate is bound at residue 247-248 (NK).

This sequence belongs to the eIF-2B alpha/beta/delta subunits family. MtnA subfamily.

The catalysed reaction is 5-(methylsulfanyl)-alpha-D-ribose 1-phosphate = 5-(methylsulfanyl)-D-ribulose 1-phosphate. The protein operates within amino-acid biosynthesis; L-methionine biosynthesis via salvage pathway; L-methionine from S-methyl-5-thio-alpha-D-ribose 1-phosphate: step 1/6. Its function is as follows. Catalyzes the interconversion of methylthioribose-1-phosphate (MTR-1-P) into methylthioribulose-1-phosphate (MTRu-1-P). The polypeptide is Methylthioribose-1-phosphate isomerase (Geotalea uraniireducens (strain Rf4) (Geobacter uraniireducens)).